We begin with the raw amino-acid sequence, 56 residues long: Large ribosomal subunit protein bL33 (56 aa).

This sequence belongs to the bacterial ribosomal protein bL33 family.

In Delftia acidovorans (strain DSM 14801 / SPH-1), this protein is Large ribosomal subunit protein bL33.